Reading from the N-terminus, the 126-residue chain is Protein ApaG (126 aa).

One can recognise an ApaG domain in the interval 2-126 (NQLAASVSVD…FRLSIPGLLH (125 aa)).

The sequence is that of Protein ApaG from Shewanella pealeana (strain ATCC 700345 / ANG-SQ1).